The following is a 337-amino-acid chain: Inner membrane protein YhjD (337 aa).

A compositionally biased stretch (basic and acidic residues) spans 1–29; sequence MTQENEIKRPIQDLEHEPIKPLDNSEKGS. The interval 1 to 31 is disordered; it reads MTQENEIKRPIQDLEHEPIKPLDNSEKGSKV. Residues 1–74 are Cytoplasmic-facing; the sequence is MTQENEIKRP…LGNQFGAAIT (74 aa). Residues 75–97 form a helical membrane-spanning segment; sequence YFSFLSMIPILMVSFAAGGFVLA. Residues 98–133 are Periplasmic-facing; sequence SHPMLLQDIFDKILQNISDPTLAATLKNTINTAVQQ. The chain crosses the membrane as a helical span at residues 134–156; sequence RTTVGLVGLAVALYSGINWMGNL. Residues 157 to 185 lie on the Cytoplasmic side of the membrane; that stretch reads REAIRAQSRDVWERSPQDQEKFWVKYLRD. The helical transmembrane segment at 186-208 threads the bilayer; sequence FISLIGLLIALIVTLSITSVAGS. The Periplasmic portion of the chain corresponds to 209-227; that stretch reads AQQMIISALHLNSIEWLKP. A helical membrane pass occupies residues 228 to 250; it reads TWRLIGLAISIFANYLLFFWIFW. At 251-261 the chain is on the cytoplasmic side; it reads RLPRHRPRKKA. A helical transmembrane segment spans residues 262–284; sequence LIRGTFLAAIGFEVIKIVMTYTL. The Periplasmic portion of the chain corresponds to 285-298; sequence PSLMKSPSGAAFGS. The helical transmembrane segment at 299 to 321 threads the bilayer; that stretch reads VLGLMAFFYFFARLTLFCAAWIA. At 322–337 the chain is on the cytoplasmic side; sequence TAEYKDDPRMPGKTQP.

It localises to the cell inner membrane. This chain is Inner membrane protein YhjD (yhjD), found in Escherichia coli (strain K12).